Consider the following 544-residue polypeptide: Chaperonin GroEL 1 (544 aa).

ATP is bound by residues 29–32, 86–90, Gly-413, 479–481, and Asp-495; these read TLGP, DGTTT, and NAA. The interval 525 to 544 is disordered; that stretch reads PEPKDNAPAGAGAGGGDFDY. Over residues 535–544 the composition is skewed to gly residues; that stretch reads AGAGGGDFDY.

This sequence belongs to the chaperonin (HSP60) family. Forms a cylinder of 14 subunits composed of two heptameric rings stacked back-to-back. Interacts with the co-chaperonin GroES.

The protein resides in the cytoplasm. It carries out the reaction ATP + H2O + a folded polypeptide = ADP + phosphate + an unfolded polypeptide.. Its function is as follows. Together with its co-chaperonin GroES, plays an essential role in assisting protein folding. The GroEL-GroES system forms a nano-cage that allows encapsulation of the non-native substrate proteins and provides a physical environment optimized to promote and accelerate protein folding. The polypeptide is Chaperonin GroEL 1 (Nostoc sp. (strain PCC 7120 / SAG 25.82 / UTEX 2576)).